The sequence spans 257 residues: Major prion protein (257 aa).

The signal sequence occupies residues 1–24 (MVKSHIGGWILLLFVATWSDVGLC). Residues 25–234 (KKRPKPGGWN…ESEAYYQRGA (210 aa)) form an interaction with GRB2, ERI3 and SYN1 region. Residues 28 to 110 (PKPGGWNTGG…GQWGKPNKPK (83 aa)) form a disordered region. Gly residues-rich tracts occupy residues 33–48 (WNTG…GSPG) and 55–101 (QGGG…GSHG). Repeat copies occupy residues 54–62 (PQGGGGWGQ), 63–70 (PHGGGWGQ), 71–78 (PHGGGWGQ), 79–86 (PHGGGWGQ), and 87–95 (PHGGGGWGQ). The segment at 54-95 (PQGGGGWGQPHGGGWGQPHGGGWGQPHGGGWGQPHGGGGWGQ) is 5 X 8 AA tandem repeats of P-H-G-G-G-W-G-Q. 12 residues coordinate Cu(2+): His64, Gly65, Gly66, His72, Gly73, Gly74, His80, Gly81, Gly82, His88, Gly90, and Gly91. An intrachain disulfide couples Cys183 to Cys218. 2 N-linked (GlcNAc...) asparagine glycosylation sites follow: Asn185 and Asn201. Ala234 carries the GPI-anchor amidated alanine lipid modification. A propeptide spans 235–257 (SAILFSPPPVILLISLLILLIVG) (removed in mature form).

The protein belongs to the prion family. Monomer and homodimer. Has a tendency to aggregate into amyloid fibrils containing a cross-beta spine, formed by a steric zipper of superposed beta-strands. Soluble oligomers may represent an intermediate stage on the path to fibril formation. Copper binding may promote oligomerization. Interacts with GRB2, APP, ERI3/PRNPIP and SYN1. Mislocalized cytosolically exposed PrP interacts with MGRN1; this interaction alters MGRN1 subcellular location and causes lysosomal enlargement. Interacts with KIAA1191.

Its subcellular location is the cell membrane. It is found in the golgi apparatus. Its function is as follows. Its primary physiological function is unclear. Has cytoprotective activity against internal or environmental stresses. May play a role in neuronal development and synaptic plasticity. May be required for neuronal myelin sheath maintenance. May play a role in iron uptake and iron homeostasis. Soluble oligomers are toxic to cultured neuroblastoma cells and induce apoptosis (in vitro). Association with GPC1 (via its heparan sulfate chains) targets PRNP to lipid rafts. Also provides Cu(2+) or Zn(2+) for the ascorbate-mediated GPC1 deaminase degradation of its heparan sulfate side chains. This is Major prion protein from Vulpes lagopus (Arctic fox).